The sequence spans 442 residues: Betaine reductase complex component B subunit alpha (442 aa).

Heterotetramer of two alpha and two beta subunits. Component of the betaine reductase complex, together with components A and C. PB is substrate specific.

It carries out the reaction acetyl phosphate + trimethylamine + [thioredoxin]-disulfide + H2O = glycine betaine + [thioredoxin]-dithiol + phosphate + H(+). Functionally, in the first step of betaine reductase, the substrate is bound to component PB via a Schiff base intermediate. Then the PB-activated substrate is nucleophilically attacked by the selenol anion of component PA to transform it to a carboxymethylated selenoether and the respective amine. By action of component PC, acetyl phosphate is formed, leaving component PA in its oxidized state. Finally component PA becomes reduced by the thioredoxin system to start a new catalytic cycle of reductive deamination. This Peptoclostridium acidaminophilum (Eubacterium acidaminophilum) protein is Betaine reductase complex component B subunit alpha (grdI).